Reading from the N-terminus, the 485-residue chain is Glutamate--tRNA ligase (485 aa).

Positions 12 to 22 (PSPTGEPHVGT) match the 'HIGH' region motif. The short motif at 253–257 (KLSKR) is the 'KMSKS' region element. Lys-256 serves as a coordination point for ATP.

The protein belongs to the class-I aminoacyl-tRNA synthetase family. Glutamate--tRNA ligase type 1 subfamily. In terms of assembly, monomer.

The protein localises to the cytoplasm. The enzyme catalyses tRNA(Glu) + L-glutamate + ATP = L-glutamyl-tRNA(Glu) + AMP + diphosphate. Functionally, catalyzes the attachment of glutamate to tRNA(Glu) in a two-step reaction: glutamate is first activated by ATP to form Glu-AMP and then transferred to the acceptor end of tRNA(Glu). The polypeptide is Glutamate--tRNA ligase (Rhizobium meliloti (strain 1021) (Ensifer meliloti)).